The primary structure comprises 137 residues: MAKKSTSRLPKRKGEYTFRGKTVAQLQEMSFEDFAELLPAKERRSIRRGFSDSQKGVLQQFRDGKESVRTHFRNMIIFPEMIGKNLEVYNGKEFVKIEIMPEMIGHRFGEYSPTRNRVSHGSAGVGATRSSKFVPLK.

The tract at residues 115-137 (RNRVSHGSAGVGATRSSKFVPLK) is disordered.

Belongs to the universal ribosomal protein uS19 family.

Protein S19 forms a complex with S13 that binds strongly to the 16S ribosomal RNA. The polypeptide is Small ribosomal subunit protein uS19 (Methanococcoides burtonii (strain DSM 6242 / NBRC 107633 / OCM 468 / ACE-M)).